We begin with the raw amino-acid sequence, 30 residues long: Kalata-B10 (30 aa).

Positions 1 to 30 form a cross-link, cyclopeptide (Gly-Asp); the sequence is GLPTCGETCFGGTCNTPGCSCSSWPICTRD. 3 cysteine pairs are disulfide-bonded: cysteine 5–cysteine 19, cysteine 9–cysteine 21, and cysteine 14–cysteine 27.

This sequence belongs to the cyclotide family. Moebius subfamily. This peptide occurs in both cyclic and linear forms. The linear form contains unmodified Trp-24, the cyclic peptide occurs in two forms with unmodified Trp-24, and with Trp-24 oxidized to form oxindolylalanine. Oxidation is enhanced by exposure to sunlight.

Probably participates in a plant defense mechanism. The polypeptide is Kalata-B10 (Oldenlandia affinis).